A 61-amino-acid chain; its full sequence is Small ribosomal subunit protein uS14 (61 aa).

Zn(2+)-binding residues include Cys24, Cys27, Cys40, and Cys43.

Belongs to the universal ribosomal protein uS14 family. Zinc-binding uS14 subfamily. Part of the 30S ribosomal subunit. Contacts proteins S3 and S10. Requires Zn(2+) as cofactor.

Binds 16S rRNA, required for the assembly of 30S particles and may also be responsible for determining the conformation of the 16S rRNA at the A site. This is Small ribosomal subunit protein uS14 from Campylobacter hominis (strain ATCC BAA-381 / DSM 21671 / CCUG 45161 / LMG 19568 / NCTC 13146 / CH001A).